The primary structure comprises 231 residues: 2,3-bisphosphoglycerate-dependent phosphoglycerate mutase (231 aa).

Substrate-binding positions include Arg-10 to Asn-17, Thr-23 to Gly-24, Arg-62, Glu-89 to Tyr-92, Lys-100, Arg-116 to Arg-117, and Gly-185 to Asn-186. Catalysis depends on His-11, which acts as the Tele-phosphohistidine intermediate. The Proton donor/acceptor role is filled by Glu-89.

The protein belongs to the phosphoglycerate mutase family. BPG-dependent PGAM subfamily. In terms of assembly, homodimer.

The catalysed reaction is (2R)-2-phosphoglycerate = (2R)-3-phosphoglycerate. It participates in carbohydrate degradation; glycolysis; pyruvate from D-glyceraldehyde 3-phosphate: step 3/5. Functionally, catalyzes the interconversion of 2-phosphoglycerate and 3-phosphoglycerate. In Buchnera aphidicola subsp. Acyrthosiphon pisum (strain 5A), this protein is 2,3-bisphosphoglycerate-dependent phosphoglycerate mutase.